Reading from the N-terminus, the 309-residue chain is Probable cell division protein kinase ECU11_1290 (309 aa).

The Protein kinase domain occupies 4–288 (YENIKQVGEG…VISSHKNTYI (285 aa)). Residues 10–18 (VGEGAFGQV) and K33 contribute to the ATP site. The Proton acceptor role is filled by D124.

This sequence belongs to the protein kinase superfamily. CMGC Ser/Thr protein kinase family. CDC2/CDKX subfamily.

It is found in the nucleus. It catalyses the reaction L-seryl-[protein] + ATP = O-phospho-L-seryl-[protein] + ADP + H(+). It carries out the reaction L-threonyl-[protein] + ATP = O-phospho-L-threonyl-[protein] + ADP + H(+). May play a role in the control of the eukaryotic cell cycle. The sequence is that of Probable cell division protein kinase ECU11_1290 from Encephalitozoon cuniculi (strain GB-M1) (Microsporidian parasite).